Here is a 180-residue protein sequence, read N- to C-terminus: Inosine/xanthosine triphosphatase (180 aa).

A substrate-binding site is contributed by 8-13 (TTNPAK). Asp38 provides a ligand contact to Mg(2+).

It belongs to the YjjX NTPase family. As to quaternary structure, homodimer. Mg(2+) is required as a cofactor. It depends on Mn(2+) as a cofactor.

It catalyses the reaction XTP + H2O = XDP + phosphate + H(+). It carries out the reaction ITP + H2O = IDP + phosphate + H(+). Functionally, phosphatase that hydrolyzes non-canonical purine nucleotides such as XTP and ITP to their respective diphosphate derivatives. Probably excludes non-canonical purines from DNA/RNA precursor pool, thus preventing their incorporation into DNA/RNA and avoiding chromosomal lesions. The protein is Inosine/xanthosine triphosphatase of Yersinia pseudotuberculosis serotype O:1b (strain IP 31758).